The following is a 73-amino-acid chain: Homeodomain-only protein (73 aa).

A DNA-binding region (homeobox; degenerate) is located at residues 3-62 (TETASGPTEDQVEILEYNFNKVNKHPDPTTLCLIAAEAGLSEEETQKWFKQRLAQWRRSE).

As to quaternary structure, interacts with serum response factor (SRF). Component of a large complex containing histone deacetylases such as HDAC2. Interacts with the acetylated forms of HSPA1A and HSPA1B. Interacts with HSPA8.

Its subcellular location is the nucleus. It localises to the cytoplasm. Atypical homeodomain protein which does not bind DNA and is required to modulate cardiac growth and development. Acts via its interaction with SRF, thereby modulating the expression of SRF-dependent cardiac-specific genes and cardiac development. Prevents SRF-dependent transcription either by inhibiting SRF binding to DNA or by recruiting histone deacetylase (HDAC) proteins that prevent transcription by SRF. Overexpression causes cardiac hypertrophy. Acts as a co-chaperone for HSPA1A and HSPA1B chaperone proteins and assists in chaperone-mediated protein refolding. The sequence is that of Homeodomain-only protein (HOPX) from Bos taurus (Bovine).